The sequence spans 139 residues: Putative pre-16S rRNA nuclease (139 aa).

It belongs to the YqgF nuclease family.

The protein resides in the cytoplasm. Its function is as follows. Could be a nuclease involved in processing of the 5'-end of pre-16S rRNA. This chain is Putative pre-16S rRNA nuclease, found in Streptococcus thermophilus (strain ATCC BAA-491 / LMD-9).